Here is a 610-residue protein sequence, read N- to C-terminus: MDSVAFEDVAVNFTQEEWALLGPSQKSLYRNVMQETIRNLDCIEMKWEDQNIGDQCQNAKRNLRSHTCEIKDDSQCGETFGQIPDSIVNKNTPRVNPCDSGECGEVVLGHSSLNCNIRVDTGHKSCEHQEYGEKPYTHKQRGKAISHQHSFQTHERPPTGKKPFDCKECAKTFSSLGNLRRHMAAHHGDGPYKCKLCGKAFVWPSLFHLHERTHTGEKPYECKQCSKAFPFYSSYLRHERIHTGEKAYECKQCSKAFPDYSTYLRHERTHTGEKPYKCTQCGKAFSCYYYTRLHERTHTGEQPYACKQCGKTFYHHTSFRRHMIRHTGDGPHKCKICGKGFDCPSSVRNHETTHTGEKPYECKQCGKVLSHSSSFRSHMITHTGDGPQKCKICGKAFGCPSLFQRHERTHTGEKPYQCKQCGKAFSLAGSLRRHEATHTGVKPYKCQCGKAFSDLSSFQNHETTHTGEKPYECKECGKAFSCFKYLSQHKRTHTVEKPYECKTCRKAFSHFSNLKVHERIHSGEKPYECKECGKAFSWLTCLLRHERIHTGEKPYECLQCGKAFTRSRFLRGHEKTHTGEKLYECKECGKALSSLRSLHRHKRTHWKDTL.

Positions 4–97 (VAFEDVAVNF…VNKNTPRVNP (94 aa)) constitute a KRAB domain. C2H2-type zinc fingers lie at residues 164–186 (FDCK…MAAH), 192–214 (YKCK…ERTH), 220–242 (YECK…ERIH), 248–270 (YECK…ERTH), 276–298 (YKCT…ERTH), 304–326 (YACK…MIRH), 332–354 (HKCK…ETTH), 360–382 (YECK…MITH), 388–410 (QKCK…ERTH), and 416–438 (YQCK…EATH). The segment at 444 to 465 (YKCQCGKAFSDLSSFQNHETTH) adopts a C2H2-type 11; atypical zinc-finger fold. C2H2-type zinc fingers lie at residues 471–493 (YECK…KRTH), 499–521 (YECK…ERIH), 527–549 (YECK…ERIH), 555–577 (YECL…EKTH), and 583–605 (YECK…KRTH).

Belongs to the krueppel C2H2-type zinc-finger protein family.

The protein resides in the nucleus. In terms of biological role, may be involved in transcriptional regulation. The polypeptide is Zinc finger protein 823 (ZNF823) (Homo sapiens (Human)).